A 616-amino-acid polypeptide reads, in one-letter code: Pyrophosphate--fructose 6-phosphate 1-phosphotransferase subunit alpha (616 aa).

It belongs to the phosphofructokinase type A (PFKA) family. PPi-dependent PFK group II subfamily. Clade 'Long' sub-subfamily. In terms of assembly, tetramer of two alpha (regulatory) and two beta (catalytic) chains.

It is found in the cytoplasm. It participates in carbohydrate degradation; glycolysis; D-glyceraldehyde 3-phosphate and glycerone phosphate from D-glucose: step 3/4. Allosterically activated by fructose 2,6-bisphosphate. Regulatory subunit of pyrophosphate--fructose 6-phosphate 1-phosphotransferase. The chain is Pyrophosphate--fructose 6-phosphate 1-phosphotransferase subunit alpha from Solanum tuberosum (Potato).